The following is a 185-amino-acid chain: Small ribosomal subunit protein bS6 (185 aa).

Basic and acidic residues predominate over residues 115-141; the sequence is AAQKAAAEKAEAARLEAEKAAEEEAAK. The segment at 115–185 is disordered; that stretch reads AAQKAAAEKA…EEPKSDEEDA (71 aa). Over residues 142 to 169 the composition is skewed to low complexity; sequence AAEAQAKEAPAAEAPAEEAPAAEAPAEA. Over residues 170–185 the composition is skewed to acidic residues; that stretch reads PAEEPAEEPKSDEEDA.

The protein belongs to the bacterial ribosomal protein bS6 family.

Binds together with bS18 to 16S ribosomal RNA. In Desulfatibacillum aliphaticivorans, this protein is Small ribosomal subunit protein bS6.